We begin with the raw amino-acid sequence, 246 residues long: Large ribosomal subunit protein uL30-like 1 (246 aa).

S54 carries the phosphoserine modification.

It belongs to the universal ribosomal protein uL30 family.

The chain is Large ribosomal subunit protein uL30-like 1 (RPL7L1) from Pongo abelii (Sumatran orangutan).